A 138-amino-acid polypeptide reads, in one-letter code: Basic phospholipase A2 PLA-N (138 aa).

A signal peptide spans 1-16 (MRTLWIMAVLLVGVEG). 7 cysteine pairs are disulfide-bonded: cysteine 42-cysteine 131, cysteine 44-cysteine 60, cysteine 59-cysteine 111, cysteine 65-cysteine 138, cysteine 66-cysteine 104, cysteine 73-cysteine 97, and cysteine 91-cysteine 102. The Ca(2+) site is built by tyrosine 43, glycine 45, and glycine 47. Residue histidine 63 is part of the active site. Aspartate 64 provides a ligand contact to Ca(2+). Aspartate 105 is an active-site residue.

The protein belongs to the phospholipase A2 family. Group II subfamily. D49 sub-subfamily. Ca(2+) serves as cofactor. In terms of tissue distribution, expressed by the venom gland.

Its subcellular location is the secreted. It catalyses the reaction a 1,2-diacyl-sn-glycero-3-phosphocholine + H2O = a 1-acyl-sn-glycero-3-phosphocholine + a fatty acid + H(+). Functionally, snake venom phospholipase A2 (PLA2) that displays edema-inducing activities, as well as presynaptic neurotoxicity and myotoxicity. PLA2 catalyzes the calcium-dependent hydrolysis of the 2-acyl groups in 3-sn-phosphoglycerides. This is Basic phospholipase A2 PLA-N from Protobothrops flavoviridis (Habu).